The chain runs to 239 residues: Ribosomal RNA small subunit methyltransferase G (239 aa).

Residues G77, F82, 128–129 (AE), and R147 each bind S-adenosyl-L-methionine. The segment at 216–239 (KKQSQTPKKFPRKPGTPNKSPIEG) is disordered.

The protein belongs to the methyltransferase superfamily. RNA methyltransferase RsmG family.

It localises to the cytoplasm. Specifically methylates the N7 position of guanine in position 535 of 16S rRNA. The sequence is that of Ribosomal RNA small subunit methyltransferase G from Bacillus licheniformis (strain ATCC 14580 / DSM 13 / JCM 2505 / CCUG 7422 / NBRC 12200 / NCIMB 9375 / NCTC 10341 / NRRL NRS-1264 / Gibson 46).